The following is a 281-amino-acid chain: Pantothenate synthetase (281 aa).

Residue 30-37 (MGYLHEGH) coordinates ATP. His37 (proton donor) is an active-site residue. Gln61 serves as a coordination point for (R)-pantoate. Residue Gln61 coordinates beta-alanine. 147–150 (GQKD) contributes to the ATP binding site. A (R)-pantoate-binding site is contributed by Gln153. ATP is bound by residues Val176 and 184 to 187 (MSSR).

This sequence belongs to the pantothenate synthetase family. Homodimer.

It is found in the cytoplasm. The catalysed reaction is (R)-pantoate + beta-alanine + ATP = (R)-pantothenate + AMP + diphosphate + H(+). The protein operates within cofactor biosynthesis; (R)-pantothenate biosynthesis; (R)-pantothenate from (R)-pantoate and beta-alanine: step 1/1. Its function is as follows. Catalyzes the condensation of pantoate with beta-alanine in an ATP-dependent reaction via a pantoyl-adenylate intermediate. In Acetivibrio thermocellus (strain ATCC 27405 / DSM 1237 / JCM 9322 / NBRC 103400 / NCIMB 10682 / NRRL B-4536 / VPI 7372) (Clostridium thermocellum), this protein is Pantothenate synthetase.